A 356-amino-acid polypeptide reads, in one-letter code: Histidinol-phosphate aminotransferase (356 aa).

Residue Lys-214 is modified to N6-(pyridoxal phosphate)lysine.

The protein belongs to the class-II pyridoxal-phosphate-dependent aminotransferase family. Histidinol-phosphate aminotransferase subfamily. In terms of assembly, homodimer. It depends on pyridoxal 5'-phosphate as a cofactor.

It catalyses the reaction L-histidinol phosphate + 2-oxoglutarate = 3-(imidazol-4-yl)-2-oxopropyl phosphate + L-glutamate. Its pathway is amino-acid biosynthesis; L-histidine biosynthesis; L-histidine from 5-phospho-alpha-D-ribose 1-diphosphate: step 7/9. The chain is Histidinol-phosphate aminotransferase from Escherichia coli O8 (strain IAI1).